A 178-amino-acid polypeptide reads, in one-letter code: PRA1 family protein 2 (178 aa).

Residues 1–41 lie on the Cytoplasmic side of the membrane; it reads MSEVRLPPLRALDDFVLGSARLAAPDPCDPQRWCHRVINNL. Residues 42 to 62 form a helical membrane-spanning segment; sequence LYYQTNYLLCFGIGLALAGYV. The Extracellular segment spans residues 63-64; that stretch reads RP. The chain crosses the membrane as a helical span at residues 65-85; sequence LHTLLSALVVAVALGMLVWAA. The Cytoplasmic portion of the chain corresponds to 86-96; sequence ETRAAVRRCRR. A helical transmembrane segment spans residues 97-119; that stretch reads SHPAACLAAVLAVGLLVLWVVGG. Residues 120-122 are Extracellular-facing; sequence ACT. The chain crosses the membrane as a helical span at residues 123–140; that stretch reads FLLSIAGPVLLILVHASL. The Cytoplasmic segment spans residues 141–178; that stretch reads RLRNLKNKIENKIESIGLKRTPMGLLLEALGQEQEAGS.

It belongs to the PRA1 family. As to quaternary structure, interacts with CCR5 and GDE1.

The protein resides in the endosome membrane. In terms of biological role, may be involved in ER/Golgi transport and vesicular traffic. Plays a proapoptotic role in cerulenin-induced neuroblastoma apoptosis. The sequence is that of PRA1 family protein 2 (PRAF2) from Macaca fascicularis (Crab-eating macaque).